We begin with the raw amino-acid sequence, 114 residues long: Ribulose bisphosphate carboxylase small subunit 2 (114 aa).

Belongs to the RuBisCO small chain family. In terms of assembly, heterohexadecamer of 8 large and 8 small subunits. Forms a CsoS2-CsoS1-RuBisCO complex.

The protein localises to the carboxysome. Its function is as follows. RuBisCO catalyzes two reactions: the carboxylation of D-ribulose 1,5-bisphosphate, the primary event in carbon dioxide fixation, as well as the oxidative fragmentation of the pentose substrate. Both reactions occur simultaneously and in competition at the same active site. Although the small subunit is not catalytic it is essential for maximal activity. In terms of biological role, replacing the endogenous type I ccbLS genes in H.neapolitanus with this carboxysomally targeted enzyme reconstitutes RuBisCO with about 25% of normal activity; the active enzyme is targeted to carboxysomes. The protein is Ribulose bisphosphate carboxylase small subunit 2 of Hydrogenovibrio crunogenus (strain DSM 25203 / XCL-2) (Thiomicrospira crunogena).